The following is a 187-amino-acid chain: Protein McbG (187 aa).

Belongs to the pentapeptide repeat protein family.

Together with proteins McbE and McbF this protein causes immunity to the peptide antibiotic microcin B17 (MccB17), which inhibits DNA replication in Enterobacteriaceae by induction of the SOS repair system. McbG alone can provide some protection. In Escherichia coli, this protein is Protein McbG (mcbG).